Consider the following 245-residue polypeptide: Deoxyadenosine kinase (245 aa).

28 to 36 lines the ATP pocket; it reads GLIGAGKTT. Residues E52, Y64, and Q75 each coordinate substrate. Catalysis depends on D99, which acts as the Proton acceptor. Substrate is bound by residues R100, D105, and E165.

Belongs to the DCK/DGK family.

The catalysed reaction is 2'-deoxyadenosine + ATP = dAMP + ADP + H(+). Functionally, specific kinase that phosphorylates deoxyadenosine but not any other deoxyribonucleoside, as part of the deoxyribonucleotide salvage pathway. The polypeptide is Deoxyadenosine kinase (dak) (Dictyostelium discoideum (Social amoeba)).